Here is a 50-residue protein sequence, read N- to C-terminus: MAQKKASLACTECGSRNYSIGVSSTPKPTRLEVNKFCKYCKKYTIHKETR.

This sequence belongs to the bacterial ribosomal protein bL33 family.

The sequence is that of Large ribosomal subunit protein bL33B from Streptococcus agalactiae serotype V (strain ATCC BAA-611 / 2603 V/R).